The sequence spans 835 residues: Protein translocase subunit SecA (835 aa).

ATP contacts are provided by residues Q85, 103 to 107 (GEGKT), and D492. Residues 788-807 (VQGEAVHPSSDGEEAKKKPV) form a disordered region. Residues C819, C821, C830, and C831 each contribute to the Zn(2+) site.

This sequence belongs to the SecA family. Monomer and homodimer. Part of the essential Sec protein translocation apparatus which comprises SecA, SecYEG and auxiliary proteins SecDF. Other proteins may also be involved. Requires Zn(2+) as cofactor.

The protein resides in the cell membrane. Its subcellular location is the cytoplasm. It catalyses the reaction ATP + H2O + cellular proteinSide 1 = ADP + phosphate + cellular proteinSide 2.. Functionally, part of the Sec protein translocase complex. Interacts with the SecYEG preprotein conducting channel. Has a central role in coupling the hydrolysis of ATP to the transfer of proteins into and across the cell membrane, serving as an ATP-driven molecular motor driving the stepwise translocation of polypeptide chains across the membrane. The sequence is that of Protein translocase subunit SecA from Bacillus cereus (strain ATCC 10987 / NRS 248).